The chain runs to 388 residues: S-adenosylmethionine synthase (388 aa).

H16 contacts ATP. D18 serves as a coordination point for Mg(2+). K(+) is bound at residue E44. Residues E57 and Q100 each contribute to the L-methionine site. The flexible loop stretch occupies residues 100 to 110; sequence QSPEIAQGVDR. Residues 165-167, D240, 246-247, A263, and K267 contribute to the ATP site; these read DAK and RK. D240 lines the L-methionine pocket. K271 contacts L-methionine.

Belongs to the AdoMet synthase family. As to quaternary structure, homotetramer; dimer of dimers. Mg(2+) serves as cofactor. The cofactor is K(+).

Its subcellular location is the cytoplasm. The enzyme catalyses L-methionine + ATP + H2O = S-adenosyl-L-methionine + phosphate + diphosphate. It functions in the pathway amino-acid biosynthesis; S-adenosyl-L-methionine biosynthesis; S-adenosyl-L-methionine from L-methionine: step 1/1. Its function is as follows. Catalyzes the formation of S-adenosylmethionine (AdoMet) from methionine and ATP. The overall synthetic reaction is composed of two sequential steps, AdoMet formation and the subsequent tripolyphosphate hydrolysis which occurs prior to release of AdoMet from the enzyme. The sequence is that of S-adenosylmethionine synthase from Acinetobacter baumannii (strain AYE).